The following is a 212-amino-acid chain: Inner membrane-spanning protein YciB (212 aa).

The next 6 helical transmembrane spans lie at 19-39 (FYGA…PVAL), 47-67 (AIYL…ALGL), 82-102 (AVIL…FILW), 105-122 (TLVN…PLFG), 147-167 (LAWV…AYTF), and 177-197 (LFGM…YLGL).

This sequence belongs to the YciB family.

It is found in the cell inner membrane. Plays a role in cell envelope biogenesis, maintenance of cell envelope integrity and membrane homeostasis. This is Inner membrane-spanning protein YciB from Thioalkalivibrio sulfidiphilus (strain HL-EbGR7).